A 281-amino-acid chain; its full sequence is Nucleotide-binding protein Patl_0571 (281 aa).

8–15 (GRSGSGKS) serves as a coordination point for ATP. Residue 56-59 (DVRN) participates in GTP binding.

The protein belongs to the RapZ-like family.

Displays ATPase and GTPase activities. The chain is Nucleotide-binding protein Patl_0571 from Pseudoalteromonas atlantica (strain T6c / ATCC BAA-1087).